The primary structure comprises 311 residues: CID domain-containing protein 1 (311 aa).

In terms of domain architecture, CID spans 1 to 134 (MSDFTEQTLR…RLQEAHQQMK (134 aa)). Residues 224 to 256 (MLEDYVKRLKEETKERESLETNLNMLIQNVRMS) adopt a coiled-coil conformation.

This Caenorhabditis briggsae protein is CID domain-containing protein 1 (cids-1).